The chain runs to 120 residues: NADH dehydrogenase [ubiquinone] 1 subunit C2 (120 aa).

Residue methionine 1 is modified to N-acetylmethionine. The chain crosses the membrane as a helical span at residues glycine 57–leucine 76.

This sequence belongs to the complex I NDUFC2 subunit family. As to quaternary structure, complex I is composed of 45 different subunits. Interacts with TMEM242. In terms of processing, there is a minor unacetylated form of subunit B14.5b.

It is found in the mitochondrion inner membrane. Functionally, accessory subunit of the mitochondrial membrane respiratory chain NADH dehydrogenase (Complex I), that is believed not to be involved in catalysis but required for the complex assembly. Complex I functions in the transfer of electrons from NADH to the respiratory chain. The immediate electron acceptor for the enzyme is believed to be ubiquinone. This Bos taurus (Bovine) protein is NADH dehydrogenase [ubiquinone] 1 subunit C2.